A 406-amino-acid chain; its full sequence is Argininosuccinate synthase (406 aa).

ATP contacts are provided by residues 10–18 and A37; that span reads AYSGGLDTS. 2 residues coordinate L-citrulline: Y88 and S93. G118 serves as a coordination point for ATP. Residues T120, N124, and D125 each coordinate L-aspartate. Residue N124 participates in L-citrulline binding. Residues R128, S180, S189, E265, and Y277 each contribute to the L-citrulline site.

It belongs to the argininosuccinate synthase family. Type 1 subfamily. As to quaternary structure, homotetramer.

Its subcellular location is the cytoplasm. It catalyses the reaction L-citrulline + L-aspartate + ATP = 2-(N(omega)-L-arginino)succinate + AMP + diphosphate + H(+). Its pathway is amino-acid biosynthesis; L-arginine biosynthesis; L-arginine from L-ornithine and carbamoyl phosphate: step 2/3. In Methylobacillus flagellatus (strain ATCC 51484 / DSM 6875 / VKM B-1610 / KT), this protein is Argininosuccinate synthase.